A 415-amino-acid chain; its full sequence is U-box domain-containing protein 29 (415 aa).

In terms of domain architecture, U-box spans 11 to 85 (TVPSFFKCPI…NIWSDSIGRR (75 aa)). ARM repeat units lie at residues 221–263 (KSKL…TISK) and 265–307 (KRVR…TLSS).

As to quaternary structure, binds to SD129 and SD25.

It catalyses the reaction S-ubiquitinyl-[E2 ubiquitin-conjugating enzyme]-L-cysteine + [acceptor protein]-L-lysine = [E2 ubiquitin-conjugating enzyme]-L-cysteine + N(6)-ubiquitinyl-[acceptor protein]-L-lysine.. The protein operates within protein modification; protein ubiquitination. Functionally, functions as an E3 ubiquitin ligase. The polypeptide is U-box domain-containing protein 29 (PUB29) (Arabidopsis thaliana (Mouse-ear cress)).